Here is a 333-residue protein sequence, read N- to C-terminus: Fe(3+)-citrate import system permease protein YfmE (333 aa).

8 helical membrane-spanning segments follow: residues 12–32 (LLAILILAVILIVLSVISIGI), 65–85 (IILAILAGAGLAAAGAILQGV), 95–115 (VVGISKGSGLAAMAVILIFPE), 120–140 (VLPFSAFAGAAIIAVLLLMIA), 194–214 (EVKLLAPWLLILFPIVCILIP), 238–258 (FILIFTAVALAGSCVAVVGSI), 279–299 (YLLPASALIGAIILLIADTLG), and 306–326 (VEIPAGILTAVIGAPYFLYLL).

The protein belongs to the binding-protein-dependent transport system permease family. FecCD subfamily. In terms of assembly, the complex is composed of one ATP-binding protein (YfmF), two transmembrane proteins (YfmD and YfmE) and a solute-binding protein (YfmC).

The protein localises to the cell membrane. Functionally, part of the ABC transporter complex YfmCDEF involved in citrate-dependent Fe(3+) import. Involved in the translocation of the substrate across the membrane. The polypeptide is Fe(3+)-citrate import system permease protein YfmE (yfmE) (Bacillus subtilis (strain 168)).